A 24-amino-acid chain; its full sequence is Ascaphin-6 (24 aa).

In terms of tissue distribution, expressed by the skin glands.

It is found in the secreted. Antimicrobial peptide that shows higher potency against Gram-negative bacteria than against Gram-positive bacteria. Has a very week hemolytic activity. The chain is Ascaphin-6 from Ascaphus truei (Coastal tailed frog).